The chain runs to 671 residues: uncharacterized protein (671 aa).

A helical membrane pass occupies residues 39–56 (ATVTVVILLLILLLGWGY).

It localises to the membrane. This is an uncharacterized protein from Treponema pallidum (strain Nichols).